Here is a 1174-residue protein sequence, read N- to C-terminus: PR domain zinc finger protein 15 (1174 aa).

Residues 75-185 enclose the SET domain; it reads SNLEIRRLDD…AGTELRVWYA (111 aa). Positions 252 to 307 are disordered; that stretch reads LPAGGQQHEAASEKEPDAPRMEPPTAAESKSIQSVMVTKEPKKKPRRGRKPKASKV. Positions 261 to 271 are enriched in basic and acidic residues; the sequence is AASEKEPDAPR. Over residues 292-304 the composition is skewed to basic residues; that stretch reads PKKKPRRGRKPKA. 2 C2H2-type zinc fingers span residues 402–424 and 434–457; these read HQCG…VRSH and FKCE…SYKH. The C2H2-type 3; degenerate zinc-finger motif lies at 468 to 486; sequence YRCGSCGKTFRMESALEFH. 2 consecutive C2H2-type zinc fingers follow at residues 495–517 and 522–544; these read FQCE…KKKH and FACE…QRRH. A Glycyl lysine isopeptide (Lys-Gly) (interchain with G-Cter in SUMO2) cross-link involves residue lysine 552. C2H2-type zinc fingers lie at residues 571–593 and 598–620; these read SGCP…LLTH and YTCE…IHVH. The disordered stretch occupies residues 639-658; the sequence is IGISSEENDDNSDESADSEP. Positions 644–655 are enriched in acidic residues; sequence EENDDNSDESAD. C2H2-type zinc fingers lie at residues 661-684, 689-711, 725-747, 753-775, 781-803, 809-831, 837-859, and 865-888; these read YSCK…MEVH, HGCS…MVIH, HPCE…KLIH, HACE…MRVH, YLCA…MKLH, YECK…YKRH, FMCE…KLIH, and WTCS…QLTH. 2 disordered regions span residues 957–1007 and 1147–1174; these read AEGK…GDET and LQPP…MYSY. A compositionally biased stretch (basic residues) spans 962 to 973; that stretch reads GKAAKRSHKRKQ. Residues 1154 to 1174 show a composition bias toward low complexity; the sequence is AAPQQAVQPQVQNEQQQMYSY.

As to expression, expressed in embryonic stem cells (ESCs) (at protein level).

It is found in the nucleus. Functionally, sequence-specific DNA-binding transcriptional regulator. Plays a role as a molecular node in a transcriptional network regulating embryonic development and cell fate decision. Stimulates the expression of upstream key transcriptional activators and repressors of the Wnt/beta-catenin and MAPK/ERK pathways, respectively, that are essential for naive pluripotency and self-renewal maintenance of embryonic stem cells (ESCs). Specifically promotes SPRY1 and RSPO1 transcription activation through recognition and direct binding of a specific DNA sequence in their promoter regions. Also plays a role in induced pluripotent stem cells (iPSCs) reprogramming. Involved in early embryo development. This chain is PR domain zinc finger protein 15, found in Mus musculus (Mouse).